The following is a 155-amino-acid chain: 3-hydroxyacyl-[acyl-carrier-protein] dehydratase FabZ (155 aa).

H54 is an active-site residue.

The protein belongs to the thioester dehydratase family. FabZ subfamily.

It is found in the cytoplasm. The catalysed reaction is a (3R)-hydroxyacyl-[ACP] = a (2E)-enoyl-[ACP] + H2O. Functionally, involved in unsaturated fatty acids biosynthesis. Catalyzes the dehydration of short chain beta-hydroxyacyl-ACPs and long chain saturated and unsaturated beta-hydroxyacyl-ACPs. In Burkholderia ambifaria (strain MC40-6), this protein is 3-hydroxyacyl-[acyl-carrier-protein] dehydratase FabZ.